A 1299-amino-acid chain; its full sequence is DNA-directed RNA polymerase subunit beta' (1299 aa).

Zn(2+) is bound by residues Cys60, Cys62, Cys75, and Cys78. Positions 188 to 209 (GAKSDQKRRAKDGAEKEMGQTR) are disordered. Mg(2+)-binding residues include Asp535, Asp537, and Asp539. Positions 882, 959, 966, and 969 each coordinate Zn(2+).

This sequence belongs to the RNA polymerase beta' chain family. As to quaternary structure, the RNAP catalytic core consists of 2 alpha, 1 beta, 1 beta' and 1 omega subunit. When a sigma factor is associated with the core the holoenzyme is formed, which can initiate transcription. The cofactor is Mg(2+). It depends on Zn(2+) as a cofactor.

The catalysed reaction is RNA(n) + a ribonucleoside 5'-triphosphate = RNA(n+1) + diphosphate. DNA-dependent RNA polymerase catalyzes the transcription of DNA into RNA using the four ribonucleoside triphosphates as substrates. The chain is DNA-directed RNA polymerase subunit beta' from Clavibacter michiganensis subsp. michiganensis (strain NCPPB 382).